The primary structure comprises 96 residues: Co-chaperonin GroES (96 aa).

Belongs to the GroES chaperonin family. As to quaternary structure, heptamer of 7 subunits arranged in a ring. Interacts with the chaperonin GroEL.

Its subcellular location is the cytoplasm. In terms of biological role, together with the chaperonin GroEL, plays an essential role in assisting protein folding. The GroEL-GroES system forms a nano-cage that allows encapsulation of the non-native substrate proteins and provides a physical environment optimized to promote and accelerate protein folding. GroES binds to the apical surface of the GroEL ring, thereby capping the opening of the GroEL channel. This is Co-chaperonin GroES from Polynucleobacter asymbioticus (strain DSM 18221 / CIP 109841 / QLW-P1DMWA-1) (Polynucleobacter necessarius subsp. asymbioticus).